The primary structure comprises 229 residues: tRNA (guanine-N(7)-)-methyltransferase (229 aa).

The S-adenosyl-L-methionine site is built by Glu-59, Glu-84, Asp-111, and Asp-134. Asp-134 is an active-site residue. Lys-138 contacts substrate. The interaction with RNA stretch occupies residues 140 to 145; that stretch reads KHNKRR. Residues Asp-170 and 207 to 210 each bind substrate; that span reads TKFE.

It belongs to the class I-like SAM-binding methyltransferase superfamily. TrmB family.

It carries out the reaction guanosine(46) in tRNA + S-adenosyl-L-methionine = N(7)-methylguanosine(46) in tRNA + S-adenosyl-L-homocysteine. The protein operates within tRNA modification; N(7)-methylguanine-tRNA biosynthesis. In terms of biological role, catalyzes the formation of N(7)-methylguanine at position 46 (m7G46) in tRNA. The sequence is that of tRNA (guanine-N(7)-)-methyltransferase from Saccharophagus degradans (strain 2-40 / ATCC 43961 / DSM 17024).